Reading from the N-terminus, the 455-residue chain is uncharacterized protein (455 aa).

N42, N49, and N70 each carry an N-linked (GlcNAc...) asparagine glycan. A run of 4 helical transmembrane segments spans residues 127 to 147 (AILISFGLIIGALLYLYTWIF), 153 to 173 (SLLDWMFISCSGIIHQFMFRI), 177 to 197 (ICALVLIGFWLLCCLVIITYY), and 377 to 397 (YKFCFIFYGIAIIVFILEIIF). N-linked (GlcNAc...) asparagine glycosylation occurs at N403.

It is found in the membrane. This is an uncharacterized protein from Caenorhabditis elegans.